The primary structure comprises 432 residues: Enolase (432 aa).

Q167 lines the (2R)-2-phosphoglycerate pocket. E209 serves as the catalytic Proton donor. 3 residues coordinate Mg(2+): D246, E291, and D318. The (2R)-2-phosphoglycerate site is built by K343, R372, S373, and K394. Catalysis depends on K343, which acts as the Proton acceptor.

It belongs to the enolase family. Component of the RNA degradosome, a multiprotein complex involved in RNA processing and mRNA degradation. Requires Mg(2+) as cofactor.

The protein resides in the cytoplasm. It localises to the secreted. It is found in the cell surface. The enzyme catalyses (2R)-2-phosphoglycerate = phosphoenolpyruvate + H2O. It functions in the pathway carbohydrate degradation; glycolysis; pyruvate from D-glyceraldehyde 3-phosphate: step 4/5. Its function is as follows. Catalyzes the reversible conversion of 2-phosphoglycerate (2-PG) into phosphoenolpyruvate (PEP). It is essential for the degradation of carbohydrates via glycolysis. This chain is Enolase, found in Colwellia psychrerythraea (strain 34H / ATCC BAA-681) (Vibrio psychroerythus).